Reading from the N-terminus, the 131-residue chain is Protein FON2 SPARE1 (131 aa).

The first 22 residues, 1-22 (MSRRLGAAAAVLLLWLAVLTFA), serve as a signal peptide directing secretion. The interval 67-131 (SPSSLTTTDR…VPTGPNPLHH (65 aa)) is disordered. Positions 76–97 (RHHHHHRHHGHHHHRGHDRWNR) are enriched in basic residues.

The protein belongs to the CLV3/ESR signal peptide family. In terms of tissue distribution, expressed in all aerial apical meristems, including the floral and inflorescence meristems in the reproductive phase and the shoot apical meristem in the vegetative phase. Also detected in the primordia of lateral organs such as the leaf and the floral organs.

The protein resides in the secreted. Its function is as follows. Involved in the maintenance of the floral meristem and of the shoot apical meristem in the vegetative phase. Suppresses the fon2 mutation and acts independently of FON1. In Oryza sativa subsp. japonica, the protein has a single amino acid substitution at the putative processing site of the signal peptide and is inactive. This Oryza sativa subsp. indica (Rice) protein is Protein FON2 SPARE1 (FOS1).